The chain runs to 402 residues: 26S proteasome non-ATPase regulatory subunit 4 homolog (402 aa).

A VWFA domain is found at 5–189 (ATMICIDNSE…LSDVLISTPI (185 aa)). The UIM 1 domain occupies 221–240 (NVDPELALALRLSMEEERAR). The segment covering 241–261 (QEAIAKKAAEESSGAENKDHA) has biased composition (basic and acidic residues). 2 disordered regions span residues 241-292 (QEAI…EDDD) and 302-321 (MSMEEGSSGAAAADAAMAEA). UIM domains follow at residues 291–310 (DDAQLLQQALAMSMEEGSSG) and 323–342 (VDDQDLALALQMSVQDAGGS). The interval 363–402 (SLPGVDPNDPSVKDLLASLHGQGEQEKKEDKSDKPEDEKK) is disordered. The span at 385–402 (GEQEKKEDKSDKPEDEKK) shows a compositional bias: basic and acidic residues.

It belongs to the proteasome subunit S5A family. In terms of assembly, component of the 19S regulatory particle (RP/PA700) base subcomplex of the 26S proteasome. The 26S proteasome is composed of a core protease (CP), known as the 20S proteasome, capped at one or both ends by the 19S regulatory particle (RP/PA700). The RP/PA700 complex is composed of at least 17 different subunits in two subcomplexes, the base and the lid, which form the portions proximal and distal to the 20S proteolytic core, respectively. Interacts with PI4KG4.

Plays a role in maintaining the structural integrity of the 19S regulatory particle (RP), subcomplex of the 26S proteasome. Plays a major role in both the direct and indirect recognition of ubiquitinated substrates of ubiquitin/26S proteasome-mediated proteolysis (UPP). Binds and presumably selects ubiquitin-conjugates for destruction. The sequence is that of 26S proteasome non-ATPase regulatory subunit 4 homolog from Oryza sativa subsp. japonica (Rice).